A 124-amino-acid polypeptide reads, in one-letter code: Small ribosomal subunit protein uS12 (124 aa).

The tract at residues 1 to 25 is disordered; the sequence is MPTINQLIRKPRKSQKEKTASPALQ. Position 89 is a 3-methylthioaspartic acid (D89).

Belongs to the universal ribosomal protein uS12 family. Part of the 30S ribosomal subunit. Contacts proteins S8 and S17. May interact with IF1 in the 30S initiation complex.

With S4 and S5 plays an important role in translational accuracy. Its function is as follows. Interacts with and stabilizes bases of the 16S rRNA that are involved in tRNA selection in the A site and with the mRNA backbone. Located at the interface of the 30S and 50S subunits, it traverses the body of the 30S subunit contacting proteins on the other side and probably holding the rRNA structure together. The combined cluster of proteins S8, S12 and S17 appears to hold together the shoulder and platform of the 30S subunit. This chain is Small ribosomal subunit protein uS12, found in Borrelia duttonii (strain Ly).